Here is an 872-residue protein sequence, read N- to C-terminus: Alanine--tRNA ligase (872 aa).

H561, H565, C662, and H666 together coordinate Zn(2+).

The protein belongs to the class-II aminoacyl-tRNA synthetase family. Zn(2+) serves as cofactor.

It is found in the cytoplasm. The catalysed reaction is tRNA(Ala) + L-alanine + ATP = L-alanyl-tRNA(Ala) + AMP + diphosphate. Functionally, catalyzes the attachment of alanine to tRNA(Ala) in a two-step reaction: alanine is first activated by ATP to form Ala-AMP and then transferred to the acceptor end of tRNA(Ala). Also edits incorrectly charged Ser-tRNA(Ala) and Gly-tRNA(Ala) via its editing domain. The protein is Alanine--tRNA ligase of Thiobacillus denitrificans (strain ATCC 25259 / T1).